Here is a 379-residue protein sequence, read N- to C-terminus: Leukocyte elastase inhibitor (379 aa).

M1 bears the N-acetylmethionine mark. An N6-acetyllysine mark is found at K137 and K177. S300 carries the phosphoserine modification. Residues 351–379 (NFTADHPFLFFIRHNSSGSILFLGRFSSP) are CARD-binding motif (CBM).

Belongs to the serpin family. Ov-serpin subfamily. As to quaternary structure, monomer. Interacts (via C-terminus) with CASP1; CASP4 (via CARD domain) and CASP5; these interactions regulate the activity of inflammatory caspases. Interacts with PRTN3. Interacts with GZMH. In human bone marrow, present in all CD45+ populations. Expression levels are highest in the neutrophil lineage, intermediate in monocytic, and lowest in lymphocytic lineage. Within the neutrophil lineage, expression is highest in promyelocytes.

The protein localises to the secreted. It is found in the cytoplasm. It localises to the cytolytic granule. Its subcellular location is the early endosome. Its function is as follows. Neutrophil serine protease inhibitor that plays an essential role in the regulation of the innate immune response, inflammation and cellular homeostasis. Acts primarily to protect the cell from proteases released in the cytoplasm during stress or infection. These proteases are important in killing microbes but when released from granules, these potent enzymes also destroy host proteins and contribute to mortality. Regulates the activity of the neutrophil proteases elastase, cathepsin G, proteinase-3, chymase, chymotrypsin, and kallikrein-3. Also acts as a potent intracellular inhibitor of GZMH by directly blocking its proteolytic activity. During inflammation, limits the activity of inflammatory caspases CASP1, CASP4 and CASP5 by suppressing their caspase-recruitment domain (CARD) oligomerization and enzymatic activation. When secreted, promotes the proliferation of beta-cells via its protease inhibitory function. This Homo sapiens (Human) protein is Leukocyte elastase inhibitor (SERPINB1).